Reading from the N-terminus, the 205-residue chain is Proteasome subunit beta (205 aa).

Positions Met1–Gly8 are cleaved as a propeptide — removed in mature form; by autocatalysis. Thr9 (nucleophile) is an active-site residue.

Belongs to the peptidase T1B family. As to quaternary structure, the 20S proteasome core is composed of 14 alpha and 14 beta subunits that assemble into four stacked heptameric rings, resulting in a barrel-shaped structure. The two inner rings, each composed of seven catalytic beta subunits, are sandwiched by two outer rings, each composed of seven alpha subunits. The catalytic chamber with the active sites is on the inside of the barrel. Has a gated structure, the ends of the cylinder being occluded by the N-termini of the alpha-subunits. Is capped at one or both ends by the proteasome regulatory ATPase, PAN.

Its subcellular location is the cytoplasm. It carries out the reaction Cleavage of peptide bonds with very broad specificity.. With respect to regulation, the formation of the proteasomal ATPase PAN-20S proteasome complex, via the docking of the C-termini of PAN into the intersubunit pockets in the alpha-rings, triggers opening of the gate for substrate entry. Interconversion between the open-gate and close-gate conformations leads to a dynamic regulation of the 20S proteasome proteolysis activity. Component of the proteasome core, a large protease complex with broad specificity involved in protein degradation. The sequence is that of Proteasome subunit beta from Methanocella paludicola (strain DSM 17711 / JCM 13418 / NBRC 101707 / SANAE).